A 681-amino-acid chain; its full sequence is MAPQVWRRRTLERCLTEVGKATGRPECFLTIQEGLASKFTSLTKVLYDFNKILENGRIHGSPLQKLVIENFDDEQIWQQLELQNEPILQYFQNAVSETINDEDISLLPESEEQEREEDGSEIEADDKEDLEDLEEEEVSDMGNDDPEMGERAENSSKSDLRKSPVFSDEDSDLDFDISKLEQQSKVQNKGQGKPREKSIVDDKFFKLSEMEAYLENIEKEEERKDDNDEEEEDIDFFEDIDSDEDEGGLFGSKKLKSGKSSRNLKYKDFFDPVESDEDITNVHDDELDSNKEDDEIAEEEAEELSISETDEDDDLQENEDNKQHKESLKRVTFALPDDAETEDTGVLNVKKNSDEVKSSFEKRQEKMNEKIASLEKELLEKKPWQLQGEVTAQKRPENSLLEETLHFDHAVRMAPVITEETTLQLEDIIKQRIRDQAWDDVVRKEKPKEDAYEYKKRLTLDHEKSKLSLAEIYEQEYIKLNQQKTAEEENPEHVEIQKMMDSLFLKLDALSNFHFIPKPPVPEIKVVSNLPAITMEEVAPVSVSDAALLAPEEIKEKNKAGDIKTAAEKTATDKKRERRKKKYQKRMKIKEKEKRRKLLEKSSVDQAGKYSKTVASEKLKQLTKTGKASFIKDEGKDKALKSSQAFFSKLQDQVKMQINDAKKTEKKKKKRQDISVHKLKL.

A phosphoserine mark is found at serine 61, serine 120, and serine 139. Over residues 105–147 (SLLPESEEQEREEDGSEIEADDKEDLEDLEEEEVSDMGNDDPE) the composition is skewed to acidic residues. 2 disordered regions span residues 105–202 (SLLP…IVDD) and 216–364 (NIEK…EKRQ). Residues 109–138 (ESEEQEREEDGSEIEADDKEDLEDLEEEEV) adopt a coiled-coil conformation. Residues 148 to 162 (MGERAENSSKSDLRK) are compositionally biased toward basic and acidic residues. 3 positions are modified to phosphoserine: serine 163, serine 167, and serine 171. The segment covering 180–190 (LEQQSKVQNKG) has biased composition (polar residues). Composition is skewed to basic and acidic residues over residues 193-202 (KPREKSIVDD) and 216-226 (NIEKEEERKDD). The stretch at 205–239 (FKLSEMEAYLENIEKEEERKDDNDEEEEDIDFFED) forms a coiled coil. Positions 227–247 (NDEEEEDIDFFEDIDSDEDEG) are enriched in acidic residues. Serine 242 carries the post-translational modification Phosphoserine. Basic residues predominate over residues 253 to 264 (KKLKSGKSSRNL). Phosphoserine occurs at positions 275 and 289. The segment covering 280–290 (TNVHDDELDSN) has biased composition (basic and acidic residues). Coiled coils occupy residues 284–324 (DDEL…NKQH) and 348–382 (NVKKNSDEVKSSFEKRQEKMNEKIASLEKELLEKK). A compositionally biased stretch (acidic residues) spans 291–318 (KEDDEIAEEEAEELSISETDEDDDLQEN). A compositionally biased stretch (basic and acidic residues) spans 319–329 (EDNKQHKESLK). Lysine 350 is covalently cross-linked (Glycyl lysine isopeptide (Lys-Gly) (interchain with G-Cter in SUMO2)). The span at 351-364 (KNSDEVKSSFEKRQ) shows a compositional bias: basic and acidic residues. Residues lysine 382 and lysine 394 each participate in a glycyl lysine isopeptide (Lys-Gly) (interchain with G-Cter in SUMO2) cross-link. Positions 469-490 (LAEIYEQEYIKLNQQKTAEEEN) form a coiled coil. Lysine 555 participates in a covalent cross-link: Glycyl lysine isopeptide (Lys-Gly) (interchain with G-Cter in SUMO2). The span at 558–575 (NKAGDIKTAAEKTATDKK) shows a compositional bias: basic and acidic residues. The tract at residues 558–606 (NKAGDIKTAAEKTATDKKRERRKKKYQKRMKIKEKEKRRKLLEKSSVDQ) is disordered. Positions 574–604 (KKRERRKKKYQKRMKIKEKEKRRKLLEKSSV) form a coiled coil. Residues 576–598 (RERRKKKYQKRMKIKEKEKRRKL) show a composition bias toward basic residues. N6-acetyllysine is present on lysine 609. Glycyl lysine isopeptide (Lys-Gly) (interchain with G-Cter in SUMO2) cross-links involve residues lysine 632 and lysine 649. Positions 648-670 (SKLQDQVKMQINDAKKTEKKKKK) form a coiled coil. The segment at 660-681 (DAKKTEKKKKKRQDISVHKLKL) is disordered. Residues 672 to 681 (QDISVHKLKL) are compositionally biased toward basic and acidic residues.

This sequence belongs to the MPP10 family. In terms of assembly, part of the small subunit (SSU) processome, composed of more than 70 proteins and the RNA chaperone small nucleolar RNA (snoRNA) U3. Component of a heterotrimeric complex containing IMP3, IMP4 and MPHOSPH10. Interacts with IMP3 and IMP4. Post-translationally, phosphorylated in M (mitotic) phase.

It localises to the nucleus. It is found in the nucleolus. The protein resides in the chromosome. In terms of biological role, component of the 60-80S U3 small nucleolar ribonucleoprotein (U3 snoRNP). Required for the early cleavages during pre-18S ribosomal RNA processing. Part of the small subunit (SSU) processome, first precursor of the small eukaryotic ribosomal subunit. During the assembly of the SSU processome in the nucleolus, many ribosome biogenesis factors, an RNA chaperone and ribosomal proteins associate with the nascent pre-rRNA and work in concert to generate RNA folding, modifications, rearrangements and cleavage as well as targeted degradation of pre-ribosomal RNA by the RNA exosome. In Homo sapiens (Human), this protein is U3 small nucleolar ribonucleoprotein protein MPP10.